Consider the following 53-residue polypeptide: Conotoxin Cal6.31 (53 aa).

The first 24 residues, 1–24 (MKLTCVLIAAVLLLAVCQLDSADA), serve as a signal peptide directing secretion. 3 cysteine pairs are disulfide-bonded: C29–C43, C36–C47, and C42–C51.

This sequence belongs to the conotoxin O1 superfamily. In terms of tissue distribution, expressed by the venom duct.

It localises to the secreted. Probable neurotoxin. In Californiconus californicus (California cone), this protein is Conotoxin Cal6.31.